We begin with the raw amino-acid sequence, 312 residues long: sn-1-specific diacylglycerol lipase ABHD11 (312 aa).

A mitochondrion-targeting transit peptide spans 1-14 (MITFKSFHCSRGWH). The AB hydrolase-1 domain maps to 62-297 (PPLVLLHGLF…GAGHWVHADK (236 aa)). Catalysis depends on charge relay system residues serine 136, glutamate 232, and histidine 291.

It belongs to the AB hydrolase superfamily. In terms of processing, phosphorylated.

The protein resides in the mitochondrion. The protein localises to the mitochondrion matrix. It catalyses the reaction 1-octadecanoyl-2-(5Z,8Z,11Z,14Z-eicosatetraenoyl)-sn-glycerol + H2O = 2-(5Z,8Z,11Z,14Z-eicosatetraenoyl)-glycerol + octadecanoate + H(+). The catalysed reaction is a 1,2-diacyl-sn-glycerol + H2O = a 2-acylglycerol + a fatty acid + H(+). The enzyme catalyses a 1,3-diacyl-sn-glycerol + H2O = a 1-acyl-sn-glycerol + a fatty acid + H(+). It carries out the reaction 1-octadecanoyl-2-(9Z-octadecenoyl)-sn-glycerol + H2O = 2-(9Z-octadecenoyl)-glycerol + octadecanoate + H(+). It catalyses the reaction 1-octadecanoyl-2-(4Z,7Z,10Z,13Z,16Z,19Z-docosahexaenoyl)-sn-glycerol + H2O = 2-(4Z,7Z,10Z,13Z,16Z,19Z-docosahexaenoyl)-glycerol + octadecanoate + H(+). The catalysed reaction is 1,2-didecanoylglycerol + H2O = decanoylglycerol + decanoate + H(+). Catalyzes the hydrolysis of diacylglycerol in vitro and may function as a key regulator in lipid metabolism, namely by regulating the intracellular levels of diacylglycerol. 1,2-diacyl-sn-glycerols are the preferred substrate over 1,3-diacyl-sn-glycerols. The enzyme hydrolyzes stearate in preference to palmitate from the sn-1 position of 1,2-diacyl-sn-glycerols. The protein is sn-1-specific diacylglycerol lipase ABHD11 of Xenopus laevis (African clawed frog).